We begin with the raw amino-acid sequence, 216 residues long: Sugar fermentation stimulation protein homolog (216 aa).

This sequence belongs to the SfsA family.

In Thermoplasma volcanium (strain ATCC 51530 / DSM 4299 / JCM 9571 / NBRC 15438 / GSS1), this protein is Sugar fermentation stimulation protein homolog.